The sequence spans 131 residues: MAFITDPIADMLTRIRNATIRKHKNVSFQHSKTKVKILEIIQKAGYIKDFQVEGDLKKNITVELKYKGNLSSISGLKRISKPSLRVYTSASKIPFVQSGFGIAILSTSKGLLTDSQARKENVGGEIIAYIW.

The protein belongs to the universal ribosomal protein uS8 family. As to quaternary structure, part of the 30S ribosomal subunit. Contacts proteins S5 and S12.

Functionally, one of the primary rRNA binding proteins, it binds directly to 16S rRNA central domain where it helps coordinate assembly of the platform of the 30S subunit. The polypeptide is Small ribosomal subunit protein uS8 (Mesomycoplasma hyopneumoniae (strain 7448) (Mycoplasma hyopneumoniae)).